The chain runs to 524 residues: M phase phosphoprotein 10 (524 aa).

Positions 85-92 match the Nuclear localization signal 1 motif; sequence VKRFAKNP. 2 disordered regions span residues 100-243 and 259-283; these read KLAL…KLGK and KLKDLSEDEEAEIENKGNEKLSTHE. Over residues 109-168 the composition is skewed to acidic residues; the sequence is DDIDEMDMDGFDSDDVDDEDKEIESNDSEGEDEEEEEEDEEEEEEEEEEEEEEKDGDNEG. Residues 131-165 are a coiled coil; that stretch reads IESNDSEGEDEEEEEEDEEEEEEEEEEEEEEKDGD. Residues 169–180 are compositionally biased toward basic and acidic residues; that stretch reads IEDKFFKIKELE. Acidic residues predominate over residues 181–191; sequence EFLEEGEAEEY. Residues 196–207 are compositionally biased toward basic residues; that stretch reads KNKKGVAQRKKQ. Positions 210-238 are enriched in acidic residues; the sequence is SDDEDEEDDDDEEEDVEFDAFAGGDDEET. Residues 257-302 adopt a coiled-coil conformation; that stretch reads KMKLKDLSEDEEAEIENKGNEKLSTHERARLKLQSKIEQMEKANLD. Basic and acidic residues predominate over residues 271 to 283; it reads IENKGNEKLSTHE. Residues 373-380 carry the Nuclear localization signal 2 motif; that stretch reads GKREAKEL. The segment at 479 to 524 is disordered; the sequence is KGDIKDESELTQEDRKRRRANKKRKFKAESANEPPKKALDTSTKNP. Positions 480–493 are enriched in basic and acidic residues; that stretch reads GDIKDESELTQEDR. Over residues 494-504 the composition is skewed to basic residues; it reads KRRRANKKRKF. Residues 505–517 show a composition bias toward basic and acidic residues; the sequence is KAESANEPPKKAL.

Belongs to the MPP10 family. Component of the ribosomal small subunit (SSU) processome. Interacts with THAL in the nucleus.

The protein localises to the nucleus. Its subcellular location is the nucleolus. Involved in nucleolar processing of pre-18S ribosomal RNA. The chain is M phase phosphoprotein 10 from Arabidopsis thaliana (Mouse-ear cress).